We begin with the raw amino-acid sequence, 76 residues long: Alpha/kappa-conotoxin-like pl14.1 (76 aa).

A signal peptide spans 1 to 27 (MPSVRSVTCCCLLWMMLSVQLVTPGSP). Residues 28 to 39 (ATAQLSGQRTAR) constitute a propeptide that is removed on maturation. Intrachain disulfides connect C46/C61 and C50/C63. The residue at position 64 (N64) is an Asparagine amide. Positions 65-76 (GKRDVVSSSMAV) are excised as a propeptide.

It belongs to the conotoxin J superfamily. Expressed by the venom duct.

It is found in the secreted. Highly inhibits both nicotinic acetylcholine receptors (neuronal (alpha-3/beta-4) and muscular (alpha-1/beta-1/epsilon/delta) subtypes) and the voltage-gated potassium channel Kv1.6/KCNA6 subtype. This is Alpha/kappa-conotoxin-like pl14.1 from Conus planorbis (Planorbis cone).